Reading from the N-terminus, the 475-residue chain is Glycogen synthase (475 aa).

Lys-15 serves as a coordination point for ADP-alpha-D-glucose.

Belongs to the glycosyltransferase 1 family. Bacterial/plant glycogen synthase subfamily.

It catalyses the reaction [(1-&gt;4)-alpha-D-glucosyl](n) + ADP-alpha-D-glucose = [(1-&gt;4)-alpha-D-glucosyl](n+1) + ADP + H(+). It functions in the pathway glycan biosynthesis; glycogen biosynthesis. Its function is as follows. Synthesizes alpha-1,4-glucan chains using ADP-glucose. This Anaeromyxobacter dehalogenans (strain 2CP-C) protein is Glycogen synthase.